The chain runs to 119 residues: Basic phospholipase A2 homolog 1 (119 aa).

Intrachain disulfides connect C11–C72, C27–C118, C29–C45, C44–C99, C51–C92, C61–C85, and C79–C90. Residues 107–117 (KENYNIDPKKR) are important for membrane-damaging activities in eukaryotes and bacteria; heparin-binding.

This sequence belongs to the phospholipase A2 family. Group I subfamily. D49 sub-subfamily. Expressed by the venom gland.

The protein resides in the secreted. This chain is Basic phospholipase A2 homolog 1, found in Notechis scutatus scutatus (Mainland tiger snake).